Consider the following 107-residue polypeptide: UPF0473 protein Ldb1604 (107 aa).

It belongs to the UPF0473 family.

In Lactobacillus delbrueckii subsp. bulgaricus (strain ATCC 11842 / DSM 20081 / BCRC 10696 / JCM 1002 / NBRC 13953 / NCIMB 11778 / NCTC 12712 / WDCM 00102 / Lb 14), this protein is UPF0473 protein Ldb1604.